The sequence spans 362 residues: 3-dehydroquinate synthase (362 aa).

Residues 71–76 (DGEQYK), 105–109 (GVVGD), 129–130 (TT), Lys142, Lys151, and 169–172 (CLKT) contribute to the NAD(+) site. Residues Glu184, His247, and His264 each coordinate Zn(2+).

The protein belongs to the sugar phosphate cyclases superfamily. Dehydroquinate synthase family. Co(2+) is required as a cofactor. Requires Zn(2+) as cofactor. The cofactor is NAD(+).

The protein localises to the cytoplasm. It catalyses the reaction 7-phospho-2-dehydro-3-deoxy-D-arabino-heptonate = 3-dehydroquinate + phosphate. It participates in metabolic intermediate biosynthesis; chorismate biosynthesis; chorismate from D-erythrose 4-phosphate and phosphoenolpyruvate: step 2/7. Its function is as follows. Catalyzes the conversion of 3-deoxy-D-arabino-heptulosonate 7-phosphate (DAHP) to dehydroquinate (DHQ). The chain is 3-dehydroquinate synthase from Shigella flexneri serotype 5b (strain 8401).